The chain runs to 511 residues: Pancreatic alpha-amylase (511 aa).

The first 15 residues, 1 to 15 (MKLFLLLSAFGFCWA), serve as a signal peptide directing secretion. At Q16 the chain carries Pyrrolidone carboxylic acid. Intrachain disulfides connect C43–C101, C85–C130, and C156–C175. N115, R173, and D182 together coordinate Ca(2+). R210 serves as a coordination point for chloride. Residue D212 is the Nucleophile of the active site. Position 216 (H216) interacts with Ca(2+). E248 (proton donor) is an active-site residue. 2 residues coordinate chloride: N313 and R352. An intrachain disulfide couples C393 to C399. N427 carries N-linked (GlcNAc...) asparagine glycosylation. The cysteines at positions 465 and 477 are disulfide-linked.

This sequence belongs to the glycosyl hydrolase 13 family. In terms of assembly, binds to the sea anemone inhibitor helianthamide and magnificamide. The cofactor is Ca(2+). Chloride is required as a cofactor.

Its subcellular location is the secreted. It is found in the extracellular space. It catalyses the reaction Endohydrolysis of (1-&gt;4)-alpha-D-glucosidic linkages in polysaccharides containing three or more (1-&gt;4)-alpha-linked D-glucose units.. This is Pancreatic alpha-amylase (AMY2) from Sus scrofa (Pig).